The chain runs to 115 residues: Large ribosomal subunit protein bL19 (115 aa).

This sequence belongs to the bacterial ribosomal protein bL19 family.

Functionally, this protein is located at the 30S-50S ribosomal subunit interface and may play a role in the structure and function of the aminoacyl-tRNA binding site. The sequence is that of Large ribosomal subunit protein bL19 from Salmonella choleraesuis (strain SC-B67).